Consider the following 524-residue polypeptide: MATVKDSGFEALEKLKATEPPVFLAPSSISEDARSASQYLFMKLKPHNPKCPFDQLSSDGFDAEQIWQQIDMQSQPLLTSLRQEVKRFAKNPEEIRKLGKLALKVSHEDDIDEMDMDGFDSDDVDDEDKEIESNDSEGEDEEEEEEDEEEEEEEEEEEEEEKDGDNEGIEDKFFKIKELEEFLEEGEAEEYGIDHKNKKGVAQRKKQNLSDDEDEEDDDDEEEDVEFDAFAGGDDEETDKLGKARYDDFFGGKKETKMKLKDLSEDEEAEIENKGNEKLSTHERARLKLQSKIEQMEKANLDPKHWTMQGEITAAKRPMNSALEVDLDFEHNARPAPVITEEVTASLEDLIKSRIIEARFDDVQRAPRLPTKGKREAKELDESKSKKGLAEVYEAEYFQKANPAFAPTTHSDELKKEASMLFKKLCLKLDALSHFHFTPKPVIEEMSIPNVSAIAMEEVAPVAVSDAAMLAPEEIFSGKGDIKDESELTQEDRKRRRANKKRKFKAESANEPPKKALDTSTKNP.

Residues 85–92 (VKRFAKNP) carry the Nuclear localization signal 1 motif. Disordered regions lie at residues 100-243 (KLAL…KLGK) and 259-283 (KLKDLSEDEEAEIENKGNEKLSTHE). Acidic residues predominate over residues 109 to 168 (DDIDEMDMDGFDSDDVDDEDKEIESNDSEGEDEEEEEEDEEEEEEEEEEEEEEKDGDNEG). A coiled-coil region spans residues 131–165 (IESNDSEGEDEEEEEEDEEEEEEEEEEEEEEKDGD). Positions 169 to 180 (IEDKFFKIKELE) are enriched in basic and acidic residues. The span at 181–191 (EFLEEGEAEEY) shows a compositional bias: acidic residues. Residues 196 to 207 (KNKKGVAQRKKQ) show a composition bias toward basic residues. The segment covering 210–238 (SDDEDEEDDDDEEEDVEFDAFAGGDDEET) has biased composition (acidic residues). Positions 257 to 302 (KMKLKDLSEDEEAEIENKGNEKLSTHERARLKLQSKIEQMEKANLD) form a coiled coil. Basic and acidic residues predominate over residues 271–283 (IENKGNEKLSTHE). Residues 373–380 (GKREAKEL) carry the Nuclear localization signal 2 motif. The disordered stretch occupies residues 479 to 524 (KGDIKDESELTQEDRKRRRANKKRKFKAESANEPPKKALDTSTKNP). Residues 480–493 (GDIKDESELTQEDR) are compositionally biased toward basic and acidic residues. The span at 494–504 (KRRRANKKRKF) shows a compositional bias: basic residues. The span at 505–517 (KAESANEPPKKAL) shows a compositional bias: basic and acidic residues.

The protein belongs to the MPP10 family. As to quaternary structure, component of the ribosomal small subunit (SSU) processome. Interacts with THAL in the nucleus.

The protein localises to the nucleus. Its subcellular location is the nucleolus. Its function is as follows. Involved in nucleolar processing of pre-18S ribosomal RNA. This Arabidopsis thaliana (Mouse-ear cress) protein is M phase phosphoprotein 10.